The chain runs to 177 residues: ATP-dependent protease subunit HslV (177 aa).

Threonine 6 is a catalytic residue. The Na(+) site is built by serine 161, cysteine 164, and threonine 167.

The protein belongs to the peptidase T1B family. HslV subfamily. In terms of assembly, a double ring-shaped homohexamer of HslV is capped on each side by a ring-shaped HslU homohexamer. The assembly of the HslU/HslV complex is dependent on binding of ATP.

It is found in the cytoplasm. It carries out the reaction ATP-dependent cleavage of peptide bonds with broad specificity.. Its activity is regulated as follows. Allosterically activated by HslU binding. Its function is as follows. Protease subunit of a proteasome-like degradation complex believed to be a general protein degrading machinery. This chain is ATP-dependent protease subunit HslV, found in Thermodesulfovibrio yellowstonii (strain ATCC 51303 / DSM 11347 / YP87).